Consider the following 349-residue polypeptide: Hydroxymethylglutaryl-CoA synthase (349 aa).

Positions 29 and 30 each coordinate (3S)-3-hydroxy-3-methylglutaryl-CoA. Glu81 serves as the catalytic Proton donor/acceptor. Cys113, Thr154, Thr202, and His235 together coordinate (3S)-3-hydroxy-3-methylglutaryl-CoA. Catalysis depends on Cys113, which acts as the Acyl-thioester intermediate. The Proton donor/acceptor role is filled by His235. Arg240 contributes to the CoA binding site. (3S)-3-hydroxy-3-methylglutaryl-CoA contacts are provided by Arg244, Asn267, and Ser297.

This sequence belongs to the thiolase-like superfamily. Archaeal HMG-CoA synthase family. As to quaternary structure, interacts with acetoacetyl-CoA thiolase that catalyzes the precedent step in the pathway and with a DUF35 protein. The acetoacetyl-CoA thiolase/HMG-CoA synthase complex channels the intermediate via a fused CoA-binding site, which allows for efficient coupling of the endergonic thiolase reaction with the exergonic HMGCS reaction.

The enzyme catalyses acetoacetyl-CoA + acetyl-CoA + H2O = (3S)-3-hydroxy-3-methylglutaryl-CoA + CoA + H(+). It functions in the pathway metabolic intermediate biosynthesis; (R)-mevalonate biosynthesis; (R)-mevalonate from acetyl-CoA: step 2/3. Functionally, catalyzes the condensation of acetyl-CoA with acetoacetyl-CoA to form 3-hydroxy-3-methylglutaryl-CoA (HMG-CoA). Functions in the mevalonate (MVA) pathway leading to isopentenyl diphosphate (IPP), a key precursor for the biosynthesis of isoprenoid compounds that are building blocks of archaeal membrane lipids. The polypeptide is Hydroxymethylglutaryl-CoA synthase (Caldivirga maquilingensis (strain ATCC 700844 / DSM 13496 / JCM 10307 / IC-167)).